The chain runs to 168 residues: Peptide methionine sulfoxide reductase MsrA 2 (168 aa).

Cys11 is an active-site residue.

This sequence belongs to the MsrA Met sulfoxide reductase family.

The catalysed reaction is L-methionyl-[protein] + [thioredoxin]-disulfide + H2O = L-methionyl-(S)-S-oxide-[protein] + [thioredoxin]-dithiol. It carries out the reaction [thioredoxin]-disulfide + L-methionine + H2O = L-methionine (S)-S-oxide + [thioredoxin]-dithiol. Functionally, has an important function as a repair enzyme for proteins that have been inactivated by oxidation. Catalyzes the reversible oxidation-reduction of methionine sulfoxide in proteins to methionine. The chain is Peptide methionine sulfoxide reductase MsrA 2 from Rhodopirellula baltica (strain DSM 10527 / NCIMB 13988 / SH1).